A 517-amino-acid chain; its full sequence is Keratin-associated protein 16-1 (517 aa).

A run of 11 repeats spans residues 73–77 (CCDPV), 93–97 (CCEAT), 128–132 (CCQPV), 153–157 (CCEPA), 168–172 (CCQPV), 198–202 (CCQPV), 208–212 (CCSAV), 228–232 (CCQPV), 248–252 (CCDPS), 283–287 (CCVQS), and 303–307 (CCVSS). Residues 73-307 (CCDPVICEPS…CQEPSCCVSS (235 aa)) form an 11 X 5 AA repeats of C-C-X(3) region. Residues 483–517 (VSEEAPCQPTEAKPISPTTREAAAAQPAASKPANC) form a disordered region. Residues 504-517 (AAAAQPAASKPANC) show a composition bias toward low complexity.

It belongs to the KRTAP type 16 family.

The chain is Keratin-associated protein 16-1 (KRTAP16-1) from Homo sapiens (Human).